Here is a 442-residue protein sequence, read N- to C-terminus: C4-dicarboxylate transport protein (442 aa).

Transmembrane regions (helical) follow at residues 10–30, 40–60, 77–97, 144–164, 183–203, 221–241, 331–351, and 354–374; these read VQVL…PSLG, FIKL…VSGI, LLYF…IVNI, FTQG…FALL, VIFV…FGAM, LMIT…GLIA, LLGV…SGFI, and AATL…ILGI. A disordered region spans residues 418–442; that stretch reads LPTIEPDVHSEERGEGRELDSLRPA. The span at 423-442 shows a compositional bias: basic and acidic residues; the sequence is PDVHSEERGEGRELDSLRPA.

It belongs to the dicarboxylate/amino acid:cation symporter (DAACS) (TC 2.A.23) family.

The protein localises to the cell membrane. Functionally, responsible for the transport of dicarboxylates such as succinate, fumarate, and malate across the membrane. The chain is C4-dicarboxylate transport protein from Deinococcus deserti (strain DSM 17065 / CIP 109153 / LMG 22923 / VCD115).